Consider the following 324-residue polypeptide: MYQGKGTYLENYLDSISTLPSELGRNFALIRELDYRTSDLVEKIEKLKSNLLVTTNGTRRAVHELTDERASKHIKLEMKQVIEYSDEKVELSNQTYELIDKHIRKLDIDLKKFETELESAEEEKKKKKSKQSQNNSTVESSTTSSSSSSSSSSLSLSSSTNNTSSLNSSSGGGGGGSGGGGGGGGHSSHSTGNKKGKARDSLTSSSSSGNINGMSSSSSSSSSSSSLSSRKQKSMAAQDIASITGNNGDADVRVFNANPNDLDLAIDPNEPTYCFCNRVSFGEMVGCENPDCKIEWFHFECVGLTSTPKGKWYCPDCTRIKVKK.

The disordered stretch occupies residues 120-237 (AEEEKKKKKS…SSRKQKSMAA (118 aa)). A compositionally biased stretch (low complexity) spans 140 to 169 (SSTTSSSSSSSSSSLSLSSSTNNTSSLNSS). Gly residues predominate over residues 170-186 (SGGGGGGSGGGGGGGGH). Over residues 201–229 (SLTSSSSSGNINGMSSSSSSSSSSSSLSS) the composition is skewed to low complexity. The segment at 271-320 (PTYCFCNRVSFGEMVGCENPDCKIEWFHFECVGLTSTPKGKWYCPDCTRI) adopts a PHD-type zinc-finger fold. Cys-274, Cys-276, Cys-287, Cys-292, His-298, Cys-301, Cys-314, and Cys-317 together coordinate Zn(2+).

Belongs to the ING family. In terms of assembly, interacts with H3K4me3 and to a lesser extent with H3K4me2.

It is found in the nucleus. In terms of biological role, involved in regulation of the growth and differentiation transition (GDT) process, probably by regulating gene expression via histone modification. The polypeptide is Inhibitor of growth protein 1 homolog (Dictyostelium discoideum (Social amoeba)).